We begin with the raw amino-acid sequence, 475 residues long: tRNA-dihydrouridine(16/17) synthase [NAD(P)(+)]-like (475 aa).

Residues 23-25 and Gln-79 each bind FMN; that span reads PMV. Cys-108 serves as the catalytic Proton donor. Residues Lys-147, His-175, 208–210, and 232–233 contribute to the FMN site; these read NGN and AE. The segment at 343–388 is disordered; that stretch reads GPREGSKENSGGRSKRALEEEEGSMEGLSKNKLKKQLRNPHKTFDP. A compositionally biased stretch (basic residues) spans 373-383; sequence NKLKKQLRNPH.

The protein belongs to the Dus family. Dus1 subfamily. FMN is required as a cofactor.

The protein resides in the cytoplasm. It is found in the nucleus. It catalyses the reaction 5,6-dihydrouridine(16) in tRNA + NADP(+) = uridine(16) in tRNA + NADPH + H(+). The catalysed reaction is 5,6-dihydrouridine(16) in tRNA + NAD(+) = uridine(16) in tRNA + NADH + H(+). It carries out the reaction 5,6-dihydrouridine(17) in tRNA + NAD(+) = uridine(17) in tRNA + NADH + H(+). The enzyme catalyses 5,6-dihydrouridine(17) in tRNA + NADP(+) = uridine(17) in tRNA + NADPH + H(+). Functionally, catalyzes the synthesis of dihydrouridine, a modified base found in the D-loop of most tRNAs. Specifically modifies U16 and U17 in cytoplasmic tRNAs. Affects the level of some mature tRNA and thereby the total cellular translation. The protein is tRNA-dihydrouridine(16/17) synthase [NAD(P)(+)]-like (Dus1l) of Mus musculus (Mouse).